A 246-amino-acid polypeptide reads, in one-letter code: Octanoyltransferase (246 aa).

The BPL/LPL catalytic domain occupies 30–227 (GRIGNTLLLL…QFGRVFGHQV (198 aa)). Residues 75 to 82 (RGGDVTYH), 155 to 157 (AIG), and 168 to 170 (GFA) each bind substrate. The active-site Acyl-thioester intermediate is Cys186.

It belongs to the LipB family.

It is found in the cytoplasm. It carries out the reaction octanoyl-[ACP] + L-lysyl-[protein] = N(6)-octanoyl-L-lysyl-[protein] + holo-[ACP] + H(+). It participates in protein modification; protein lipoylation via endogenous pathway; protein N(6)-(lipoyl)lysine from octanoyl-[acyl-carrier-protein]: step 1/2. Functionally, catalyzes the transfer of endogenously produced octanoic acid from octanoyl-acyl-carrier-protein onto the lipoyl domains of lipoate-dependent enzymes. Lipoyl-ACP can also act as a substrate although octanoyl-ACP is likely to be the physiological substrate. This chain is Octanoyltransferase, found in Acidobacterium capsulatum (strain ATCC 51196 / DSM 11244 / BCRC 80197 / JCM 7670 / NBRC 15755 / NCIMB 13165 / 161).